The primary structure comprises 422 residues: Probable tRNA pseudouridine synthase D (422 aa).

Asp83 functions as the Nucleophile in the catalytic mechanism. Positions 164 to 386 constitute a TRUD domain; it reads GFPNYFGSQR…AGGRRELLIK (223 aa).

This sequence belongs to the pseudouridine synthase TruD family.

The enzyme catalyses uridine(13) in tRNA = pseudouridine(13) in tRNA. Functionally, could be responsible for synthesis of pseudouridine from uracil-13 in transfer RNAs. The protein is Probable tRNA pseudouridine synthase D of Thermococcus sibiricus (strain DSM 12597 / MM 739).